The sequence spans 198 residues: Recombination protein RecR (198 aa).

Residues 57 to 72 (CSVCGHITENDPCYIC) form a C4-type zinc finger. The Toprim domain occupies 80–175 (SVICVVEDDK…KVTRLAQGLS (96 aa)).

This sequence belongs to the RecR family.

Its function is as follows. May play a role in DNA repair. It seems to be involved in an RecBC-independent recombinational process of DNA repair. It may act with RecF and RecO. The sequence is that of Recombination protein RecR from Staphylococcus haemolyticus (strain JCSC1435).